We begin with the raw amino-acid sequence, 131 residues long: Putative superoxide reductase (131 aa).

Fe cation-binding residues include glutamate 15, histidine 17, histidine 45, histidine 51, cysteine 115, and histidine 118.

Belongs to the desulfoferrodoxin family. Fe cation is required as a cofactor.

The enzyme catalyses reduced [rubredoxin] + superoxide + 2 H(+) = oxidized [rubredoxin] + H2O2. Its function is as follows. Uses electrons from reduced NADP, by way of rubredoxin and an oxidoreductase, to catalyze the reduction of superoxide to hydrogen peroxide. The sequence is that of Putative superoxide reductase from Thermotoga maritima (strain ATCC 43589 / DSM 3109 / JCM 10099 / NBRC 100826 / MSB8).